Reading from the N-terminus, the 326-residue chain is Dolichyl-phosphate beta-glucosyltransferase (326 aa).

Residues 1–7 are Lumenal-facing; it reads MWTCLCQ. Residues 8 to 28 traverse the membrane as a helical segment; sequence LCFYLLSTLAVAALSIAALVL. The Cytoplasmic segment spans residues 29-326; the sequence is YKTKPYPNIK…RIASIQKKEK (298 aa).

Belongs to the glycosyltransferase 2 family.

The protein localises to the endoplasmic reticulum membrane. It carries out the reaction a di-trans,poly-cis-dolichyl phosphate + UDP-alpha-D-glucose = a di-trans,poly-cis-dolichyl beta-D-glucosyl phosphate + UDP. The protein operates within protein modification; protein glycosylation. Required for normal production of N-glycosylated proteins in the endoplasmic reticulum (ER). Required for embryonic segmentation, dorsal-ventral patterning and gastrulation. Required for chitin orientation and shaping of the apical and lateral plasma membranes of epidermal cells during cuticle differentiation. Also required for correctly shaping apical membrane topology of the epithelia of other organs such as the midgut and the hindgut. The protein is Dolichyl-phosphate beta-glucosyltransferase (wol) of Drosophila melanogaster (Fruit fly).